We begin with the raw amino-acid sequence, 560 residues long: Glutamate--tRNA ligase, chloroplastic/mitochondrial (560 aa).

47 to 49 (RFA) is an L-glutamate binding site. The 'HIGH' region signature appears at 50–60 (PSPTGNLHVGG). Histidine 57 contributes to the ATP binding site. L-glutamate-binding positions include glutamate 83, 235-239 (YNFCV), and arginine 253. Residues glutamate 256 and 291–295 (KLSKR) contribute to the ATP site. Positions 291–295 (KLSKR) match the 'KMSKS' region motif.

It belongs to the class-I aminoacyl-tRNA synthetase family. Glutamate--tRNA ligase type 1 subfamily.

The protein resides in the plastid. Its subcellular location is the chloroplast. It localises to the mitochondrion. It carries out the reaction tRNA(Glu) + L-glutamate + ATP = L-glutamyl-tRNA(Glu) + AMP + diphosphate. Its function is as follows. Catalyzes the attachment of glutamate to tRNA(Glu) in a two-step reaction: glutamate is first activated by ATP to form Glu-AMP and then transferred to the acceptor end of tRNA(Glu). The sequence is that of Glutamate--tRNA ligase, chloroplastic/mitochondrial from Hordeum vulgare (Barley).